A 179-amino-acid chain; its full sequence is Replication restart protein DnaT (179 aa).

Positions 156–179 (GGLPKRDVNTVSEPDSQIPPGFRG) are disordered.

The protein belongs to the DnaT family. Homooligomerizes. Interacts with PriB. Component of the replication restart primosome. Primosome assembly occurs via a 'hand-off' mechanism. PriA binds to replication forks, subsequently PriB then DnaT bind; DnaT then displaces ssDNA to generate the helicase loading substrate.

Its function is as follows. Involved in the restart of stalled replication forks, which reloads the replicative helicase on sites other than the origin of replication. Can function in multiple replication restart pathways. Displaces ssDNA from a PriB-ssDNA complex. Probably forms a spiral filament on ssDNA. This is Replication restart protein DnaT from Escherichia coli O157:H7.